A 113-amino-acid polypeptide reads, in one-letter code: UPF0251 protein TK0562 (113 aa).

It belongs to the UPF0251 family.

This is UPF0251 protein TK0562 from Thermococcus kodakarensis (strain ATCC BAA-918 / JCM 12380 / KOD1) (Pyrococcus kodakaraensis (strain KOD1)).